Reading from the N-terminus, the 467-residue chain is Nuclear distribution protein nudF (467 aa).

A LisH domain is found at 9-41; it reads QAEELHKSIIAYLASVNLTESSAALRAELGDSV. Residues 60–87 adopt a coiled-coil conformation; that stretch reads TSVVRLQKKIMDLESRCAALQSELDSAT. WD repeat units follow at residues 113-154, 156-196, 200-247, 250-289, 292-352, 354-393, 398-428, and 429-466; these read GHRN…RTVK, HTKA…KNIR, GHDH…CVKT, GHVD…TKST, GHEH…IKTL, GHDN…KCVR, AHGH…NGTP, and AATS…RIFA. Residues 417-439 form a disordered region; the sequence is GANGEAETNGTPAATSTTNGVRP. Residues 422–436 are compositionally biased toward polar residues; that stretch reads AETNGTPAATSTTNG.

This sequence belongs to the WD repeat LIS1/nudF family. Self-associates. Interacts with nudE and dynein.

The protein resides in the cytoplasm. It localises to the cytoskeleton. Its subcellular location is the spindle pole. Positively regulates the activity of the minus-end directed microtubule motor protein dynein. May enhance dynein-mediated microtubule sliding by targeting dynein to the microtubule plus end. Required for nuclear migration during vegetative growth as well as development. Required for retrograde early endosome (EE) transport from the hyphal tip. Required for localization of dynein to the mitotic spindle poles. Recruits additional proteins to the dynein complex at SPBs. This is Nuclear distribution protein nudF from Aspergillus fumigatus (strain CBS 144.89 / FGSC A1163 / CEA10) (Neosartorya fumigata).